Here is a 247-residue protein sequence, read N- to C-terminus: 3-deoxy-manno-octulosonate cytidylyltransferase (247 aa).

It belongs to the KdsB family.

Its subcellular location is the cytoplasm. The enzyme catalyses 3-deoxy-alpha-D-manno-oct-2-ulosonate + CTP = CMP-3-deoxy-beta-D-manno-octulosonate + diphosphate. Its pathway is nucleotide-sugar biosynthesis; CMP-3-deoxy-D-manno-octulosonate biosynthesis; CMP-3-deoxy-D-manno-octulosonate from 3-deoxy-D-manno-octulosonate and CTP: step 1/1. It participates in bacterial outer membrane biogenesis; lipopolysaccharide biosynthesis. In terms of biological role, activates KDO (a required 8-carbon sugar) for incorporation into bacterial lipopolysaccharide in Gram-negative bacteria. The polypeptide is 3-deoxy-manno-octulosonate cytidylyltransferase (Rhodopseudomonas palustris (strain BisA53)).